A 674-amino-acid chain; its full sequence is Probable nucleolar GTP-binding protein 1 (674 aa).

Residues 169 to 346 (RTLLLTGYPN…VKDTACSILF (178 aa)) form the OBG-type G domain. Residues 175–182 (GYPNVGKS), 221–225 (DTPGI), and 289–292 (NKID) contribute to the GTP site. The segment covering 518–527 (RINHQIKDSS) has biased composition (basic and acidic residues). Disordered stretches follow at residues 518 to 538 (RINH…RRGI) and 564 to 674 (VRDH…NDFR). Residues 570–580 (SRISGKKRSRS) show a composition bias toward basic residues. Basic and acidic residues-rich tracts occupy residues 619 to 633 (GFHD…DKLD) and 641 to 653 (NQDG…DRHV).

The protein belongs to the TRAFAC class OBG-HflX-like GTPase superfamily. OBG GTPase family. NOG subfamily.

Its subcellular location is the nucleus. It is found in the nucleolus. Functionally, involved in the biogenesis of the 60S ribosomal subunit. The chain is Probable nucleolar GTP-binding protein 1 (nog1) from Dictyostelium discoideum (Social amoeba).